The primary structure comprises 338 residues: tRNA N6-adenosine threonylcarbamoyltransferase (338 aa).

Residues His-109 and His-113 each contribute to the Fe cation site. Residues 132 to 136 (AISGA), Asp-165, Gly-178, and Asn-277 contribute to the substrate site. Asp-302 lines the Fe cation pocket.

The protein belongs to the KAE1 / TsaD family. Fe(2+) serves as cofactor.

The protein localises to the cytoplasm. The catalysed reaction is L-threonylcarbamoyladenylate + adenosine(37) in tRNA = N(6)-L-threonylcarbamoyladenosine(37) in tRNA + AMP + H(+). Required for the formation of a threonylcarbamoyl group on adenosine at position 37 (t(6)A37) in tRNAs that read codons beginning with adenine. Is involved in the transfer of the threonylcarbamoyl moiety of threonylcarbamoyl-AMP (TC-AMP) to the N6 group of A37, together with TsaE and TsaB. TsaD likely plays a direct catalytic role in this reaction. This is tRNA N6-adenosine threonylcarbamoyltransferase from Chlamydia trachomatis serovar A (strain ATCC VR-571B / DSM 19440 / HAR-13).